Consider the following 245-residue polypeptide: MSRIDGRTPQQLRPVTIERGWSKHAEGSVLVSFGDTKVLCNASVTEGVPRWRKGSGEGWVTAEYAMLPRATNTRGDRESVKGRIGGRTHEISRLIGRSLRAVIDYKALGENTVVLDCDVLQADGGTRTAAITGAYVALADAVAWAQGRKLIKANRKPLTGTVSAVSVGIVDGTPLLDLRYEEDVRADTDMNVVCTGDGRFVEVQGTAEAEPFARDELNTLLDLATAGCTELAELQRKALDATLER.

Phosphate-binding positions include Arg-87 and 125 to 127 (GTR).

It belongs to the RNase PH family. Homohexameric ring arranged as a trimer of dimers.

The catalysed reaction is tRNA(n+1) + phosphate = tRNA(n) + a ribonucleoside 5'-diphosphate. In terms of biological role, phosphorolytic 3'-5' exoribonuclease that plays an important role in tRNA 3'-end maturation. Removes nucleotide residues following the 3'-CCA terminus of tRNAs; can also add nucleotides to the ends of RNA molecules by using nucleoside diphosphates as substrates, but this may not be physiologically important. Probably plays a role in initiation of 16S rRNA degradation (leading to ribosome degradation) during starvation. This Streptomyces coelicolor (strain ATCC BAA-471 / A3(2) / M145) protein is Ribonuclease PH.